We begin with the raw amino-acid sequence, 116 residues long: Ly-6/neurotoxin-like protein 1 (116 aa).

Residues 1–20 form the signal peptide; sequence MTPLLTLFLVALIGLPLAQA. The region spanning 21–105 is the UPAR/Ly6 domain; sequence LDCHVCAYNG…FAAPATLALA (85 aa). Disulfide bonds link Cys-23–Cys-46, Cys-26–Cys-33, Cys-39–Cys-64, Cys-68–Cys-85, and Cys-86–Cys-91. Residue Asn-92 is the site of GPI-anchor amidated asparagine attachment. Residues 93-116 constitute a propeptide, removed in mature form; the sequence is GAGFAAPATLALAPILLATLWGLL.

In terms of assembly, interacts with nAChRs containing alpha-4:beta-2 (CHRNA4:CHRNB2) and alpha-7 (CHRNA7) subunits. Interacts with CHRNA4 probably in the endoplasmic reticulum prior to nAChR pentameric assembly. Interacts with KCNA2/Potassium voltage-gated channel subfamily A member 2.

The protein localises to the cell membrane. It is found in the cell projection. It localises to the dendrite. Its subcellular location is the endoplasmic reticulum. In terms of biological role, acts in different tissues through interaction to nicotinic acetylcholine receptors (nAChRs). The proposed role as modulator of nAChR activity seems to be dependent on the nAChR subtype and stoichiometry, and to involve an effect on nAChR trafficking and its cell surface expression, and on single channel properties of the nAChR inserted in the plasma membrane. Modulates functional properties of nicotinic acetylcholine receptors (nAChRs) to prevent excessive excitation, and hence neurodegeneration. Enhances desensitization by increasing both the rate and extent of desensitization of alpha-4:beta-2-containing nAChRs and slowing recovery from desensitization. Promotes large amplitude ACh-evoked currents through alpha-4:beta-2 nAChRs. Is involved in regulation of the nAChR pentameric assembly in the endoplasmic reticulum. Shifts stoichiometry from high sensitivity alpha-4(2):beta-2(3) to low sensitivity alpha-4(3):beta-2(2) nAChR. In vitro modulates alpha-3:beta-4-containing nAChRs. Reduces cell surface expression of (alpha-3:beta-4)(2):beta-4 and (alpha-3:beta-4)(2):alpha-5 nAChRs suggesting an interaction with nAChR alpha-3(-):(+)beta-4 subunit interfaces and an allosteric mode. Corresponding single channel effects characterized by decreased unitary conductance, altered burst proportions and enhanced desensitization/inactivation seem to depend on nAChR alpha:alpha subunit interfaces and are greater in (alpha-3:beta-2)(2):alpha-3 when compared to (alpha-3:beta-2)(2):alpha-5 nAChRs. Prevents plasticity in the primary visual cortex late in life. The sequence is that of Ly-6/neurotoxin-like protein 1 from Saimiri boliviensis boliviensis (Bolivian squirrel monkey).